We begin with the raw amino-acid sequence, 309 residues long: Probable sugar phosphate/phosphate translocator At5g05820 (309 aa).

Transmembrane regions (helical) follow at residues 9–29 (FFTIGLVASWYSSNIGVLLLN), 42–62 (IFLTMCHMTACSLLSYVAIAW), 77–97 (FFKIAALSLVFCVSVVFGNIS), 100–120 (FLPVSFNQAIGATTPFFTAVF), 130–150 (AWLTYFTLVPVVTGVVIASGG), 154–174 (FHLFGFLMCIAATAARALKSV), 192–212 (LLLYMAPIAVVLLLPATLIME), 229–249 (IVWYLLFNSALAYLVNLTNFL), 256–278 (ALTLQVLGNAKGAVAVVVSILIF), and 282–301 (VSVTGMLGYSLTVCGVILYS). Residues 30 to 147 (KYLLSNYGFK…VPVVTGVVIA (118 aa)) form the EamA domain.

This sequence belongs to the TPT transporter family. TPT (TC 2.A.7.9) subfamily.

It localises to the membrane. The chain is Probable sugar phosphate/phosphate translocator At5g05820 from Arabidopsis thaliana (Mouse-ear cress).